The following is a 442-amino-acid chain: tRNA-2-methylthio-N(6)-dimethylallyladenosine synthase (442 aa).

The MTTase N-terminal domain occupies 6 to 122 (RKFYIHTFGC…LPVLIAEAGK (117 aa)). Residues cysteine 15, cysteine 51, cysteine 85, cysteine 157, cysteine 161, and cysteine 164 each coordinate [4Fe-4S] cluster. In terms of domain architecture, Radical SAM core spans 143–373 (RTQSLTAFVP…IDLQNGISAE (231 aa)). One can recognise a TRAM domain in the interval 376-439 (RLAIGSVVEV…SATLIGRAAE (64 aa)).

This sequence belongs to the methylthiotransferase family. MiaB subfamily. As to quaternary structure, monomer. Requires [4Fe-4S] cluster as cofactor.

The protein localises to the cytoplasm. It carries out the reaction N(6)-dimethylallyladenosine(37) in tRNA + (sulfur carrier)-SH + AH2 + 2 S-adenosyl-L-methionine = 2-methylsulfanyl-N(6)-dimethylallyladenosine(37) in tRNA + (sulfur carrier)-H + 5'-deoxyadenosine + L-methionine + A + S-adenosyl-L-homocysteine + 2 H(+). Catalyzes the methylthiolation of N6-(dimethylallyl)adenosine (i(6)A), leading to the formation of 2-methylthio-N6-(dimethylallyl)adenosine (ms(2)i(6)A) at position 37 in tRNAs that read codons beginning with uridine. The protein is tRNA-2-methylthio-N(6)-dimethylallyladenosine synthase of Chlorobium limicola (strain DSM 245 / NBRC 103803 / 6330).